Here is a 725-residue protein sequence, read N- to C-terminus: Mitochondrial 15S rRNA processing factor CCM1 (725 aa).

The N-terminal 21 residues, 1-21, are a transit peptide targeting the mitochondrion; sequence MRLSRIGTPKVSVTRVIPVRN. 7 PPR repeats span residues 189–223, 224–259, 260–290, 296–330, 333–363, 401–435, and 601–635; these read SAVD…GISP, DRYL…GWAP, TDYT…MKLK, NKKI…SVAT, DTTA…LETE, NEKL…RFKM, and NHDI…RKTP.

Belongs to the CCM1 family. Binds to mitochondrial small subunit 15S rRNA.

Its subcellular location is the mitochondrion. Functionally, regulates mitochondrial small subunit maturation by controlling 15S rRNA 5'-end processing. Localizes to the 5' precursor of the 15S rRNA in a position that is subsequently occupied by mS47 in the mature yeast mtSSU. Uses structure and sequence-specific RNA recognition, binding to a single-stranded region of the precursor and specifically recognizing bases -6 to -1. The exchange of Ccm1 for mS47 is coupled to the irreversible removal of precursor rRNA that is accompanied by conformational changes of the mitoribosomal proteins uS5m and mS26. These conformational changes signal completion of 5'-end rRNA processing through protection of the mature 5'-end of the 15S rRNA and stabilization of mS47. The removal of the 5' precursor together with the dissociation of Ccm1 may be catalyzed by the 5'-3' exoribonuclease Pet127. Involved in the specific removal of group I introns in mitochondrial encoded transcripts. The sequence is that of Mitochondrial 15S rRNA processing factor CCM1 (CCM1) from Komagataella phaffii (strain GS115 / ATCC 20864) (Yeast).